A 252-amino-acid polypeptide reads, in one-letter code: Hydrolase phiM (252 aa).

The Charge relay system role is filled by Ser-126.

The protein belongs to the LovG family.

It participates in secondary metabolite biosynthesis. Functionally, hydrolase; part of the gene cluster that mediates the biosynthesis of the antihypercholesterolemic agents phomoidrides which are dimeric anhydrides. Within the pathway, phiM releases the C12-fatty acyl chain from phiA. The pathway begins with the highly reducing polyketide synthase tstA that catalyzes the formation of a C12-fatty acyl-ACP, starting from one acetate and 5 malonate units. The hydrolase tstM is involved in the release of the C12-fatty acyl chain from phiA. The alkylcitrate synthase (ACS) tstJ and the alkylcitrate dehydratase (ACDH) tstI then give rise to decarboxylated monomeric anhydrides by coupling the C12-fatty acyl chain with oxalacetic acid. The cyclase tstC is responsible for the dimerization of the monomeric anhydrides which leads to the production of prephomoidride that contains the characteristic bicyclo[4.3.1]deca-1,6-diene system of phomoidrides. Iterative oxidation catalyzed by the alpha-ketoglutarate-dependent dioxygenase tstK produced then phomoidride A. Finally, the methyltransferase tstE converts phomoidride A to phomoidride B via an acetalization reaction. The phosphatidylethanolamine-binding protein tstB and tstN are not essential for dimerization and their functions have still to be determined. The chain is Hydrolase phiM from Talaromyces stipitatus (strain ATCC 10500 / CBS 375.48 / QM 6759 / NRRL 1006) (Penicillium stipitatum).